Reading from the N-terminus, the 364-residue chain is Aminomethyltransferase (364 aa).

Belongs to the GcvT family. As to quaternary structure, the glycine cleavage system is composed of four proteins: P, T, L and H.

It catalyses the reaction N(6)-[(R)-S(8)-aminomethyldihydrolipoyl]-L-lysyl-[protein] + (6S)-5,6,7,8-tetrahydrofolate = N(6)-[(R)-dihydrolipoyl]-L-lysyl-[protein] + (6R)-5,10-methylene-5,6,7,8-tetrahydrofolate + NH4(+). Its function is as follows. The glycine cleavage system catalyzes the degradation of glycine. This is Aminomethyltransferase from Thermotoga sp. (strain RQ2).